We begin with the raw amino-acid sequence, 227 residues long: 7-cyano-7-deazaguanine synthase (227 aa).

16–26 contributes to the ATP binding site; sequence FSGGQDSTTCL. 4 residues coordinate Zn(2+): Cys194, Cys202, Cys205, and Cys208.

It belongs to the QueC family. It depends on Zn(2+) as a cofactor.

The enzyme catalyses 7-carboxy-7-deazaguanine + NH4(+) + ATP = 7-cyano-7-deazaguanine + ADP + phosphate + H2O + H(+). The protein operates within purine metabolism; 7-cyano-7-deazaguanine biosynthesis. Its function is as follows. Catalyzes the ATP-dependent conversion of 7-carboxy-7-deazaguanine (CDG) to 7-cyano-7-deazaguanine (preQ(0)). The protein is 7-cyano-7-deazaguanine synthase of Haemophilus influenzae (strain PittEE).